We begin with the raw amino-acid sequence, 270 residues long: Phosphate import ATP-binding protein PstB 2 (270 aa).

Residues 25 to 265 (LQAKDINIYY…PEKKQTEDYI (241 aa)) enclose the ABC transporter domain. 57-64 (GPSGCGKS) serves as a coordination point for ATP.

The protein belongs to the ABC transporter superfamily. Phosphate importer (TC 3.A.1.7) family. The complex is composed of two ATP-binding proteins (PstB), two transmembrane proteins (PstC and PstA) and a solute-binding protein (PstS).

The protein localises to the cell membrane. The enzyme catalyses phosphate(out) + ATP + H2O = ADP + 2 phosphate(in) + H(+). In terms of biological role, part of the ABC transporter complex PstSACB involved in phosphate import. Responsible for energy coupling to the transport system. The sequence is that of Phosphate import ATP-binding protein PstB 2 from Shouchella clausii (strain KSM-K16) (Alkalihalobacillus clausii).